We begin with the raw amino-acid sequence, 1108 residues long: Valine--tRNA ligase, mitochondrial 1 (1108 aa).

The transit peptide at 1 to 46 (MSLLFLRRAKPLFVSCCSATHSRSSFLSPTLTNQLVRSFHGSRTMS) directs the protein to the mitochondrion. Positions 57–93 (ELERKKKKEEKAKEKELKKQKALEKERLAELKAKQAK) are enriched in basic and acidic residues. Positions 57–138 (ELERKKKKEE…RKRLSSQMAK (82 aa)) are disordered. The short motif at 177–187 (PNVTGALHIGH) is the 'HIGH' region element. Residues 695–699 (KMSKS) carry the 'KMSKS' region motif. Lys698 is an ATP binding site. The stretch at 1032-1064 (AINTEAEQEKIRNKIGELQKQKEKLQKMMSVST) forms a coiled coil.

Belongs to the class-I aminoacyl-tRNA synthetase family.

Its subcellular location is the mitochondrion. The protein resides in the cytoplasm. It is found in the cytosol. The enzyme catalyses tRNA(Val) + L-valine + ATP = L-valyl-tRNA(Val) + AMP + diphosphate. Functionally, required for embryo development and seed viability. The chain is Valine--tRNA ligase, mitochondrial 1 from Arabidopsis thaliana (Mouse-ear cress).